Here is a 657-residue protein sequence, read N- to C-terminus: Threonine--tRNA ligase (657 aa).

The 62-residue stretch at 1-62 (MALDITFPDG…AHSGQLQIMT (62 aa)) folds into the TGS domain. Residues 240-538 (DHRVIGRDLD…LTEIYKGAFP (299 aa)) form a catalytic region. Positions 334, 385, and 515 each coordinate Zn(2+).

This sequence belongs to the class-II aminoacyl-tRNA synthetase family. Homodimer. Requires Zn(2+) as cofactor.

Its subcellular location is the cytoplasm. The catalysed reaction is tRNA(Thr) + L-threonine + ATP = L-threonyl-tRNA(Thr) + AMP + diphosphate + H(+). Its function is as follows. Catalyzes the attachment of threonine to tRNA(Thr) in a two-step reaction: L-threonine is first activated by ATP to form Thr-AMP and then transferred to the acceptor end of tRNA(Thr). Also edits incorrectly charged L-seryl-tRNA(Thr). The polypeptide is Threonine--tRNA ligase (Lacticaseibacillus paracasei (strain ATCC 334 / BCRC 17002 / CCUG 31169 / CIP 107868 / KCTC 3260 / NRRL B-441) (Lactobacillus paracasei)).